Consider the following 160-residue polypeptide: MSSVVCPGSFDPVTLGHIDVFERAAAQFDEVVVAILINPVKKGMFDLDERIAMINESTMHLPNLRVEAGEGLVVALVRSRGMTAIVKGLRTGVDFEYELQMAQMNKHIAGVDTFFVATAPRYSFVSSSLVKEVAMLGGDVSELLPESVNRRFREKMSGTS.

Serine 9 contributes to the substrate binding site. ATP is bound by residues 9–10 (SF) and histidine 17. 3 residues coordinate substrate: lysine 41, valine 73, and lysine 87. ATP contacts are provided by residues 88–90 (GLR), glutamate 98, and 122–128 (YSFVSSS).

The protein belongs to the bacterial CoaD family. As to quaternary structure, homohexamer. The cofactor is Mg(2+).

It localises to the cytoplasm. It carries out the reaction (R)-4'-phosphopantetheine + ATP + H(+) = 3'-dephospho-CoA + diphosphate. Its pathway is cofactor biosynthesis; coenzyme A biosynthesis; CoA from (R)-pantothenate: step 4/5. Reversibly transfers an adenylyl group from ATP to 4'-phosphopantetheine, yielding dephospho-CoA (dPCoA) and pyrophosphate. The sequence is that of Phosphopantetheine adenylyltransferase from Mycobacterium leprae (strain TN).